Reading from the N-terminus, the 309-residue chain is MAVNQSHTENRRGALIPNGESLLKRSPNVELSFPQRSEGSNVFSGRKTGTLFLTSYRVIFITSCSISDPMLSFMMPFDLMTNLTVEQPVFAANFIKGTIQAAPYGGWEGQATFKLVFRNGDAIEFAQLMVKAASAAARGFPLRTLNDWFSSMGIYVITGEGNMCTPQMPCSVIVYGAPPAGYGAPPPGYGAPPAGYGAQPVGNEGPPVGYRASPVRYGAPPLGYGAPPAGYGAPPLGYGAPPLGYGTPPLGYGAPPLGYGAPPAGNEGPPAGYRASPAGSGARPQESTAAQAPENEASLPSASSSQVHS.

Residues 45 to 87 (GRKTGTLFLTSYRVIFITSCSISDPMLSFMMPFDLMTNLTVEQ) enclose the GRAM domain. A run of 10 repeats spans residues 175–181 (YGAPPAG), 182–188 (YGAPPPG), 189–195 (YGAPPAG), 217–223 (YGAPPLG), 224–230 (YGAPPAG), 231–237 (YGAPPLG), 238–244 (YGAPPLG), 245–251 (YGTPPLG), 252–258 (YGAPPLG), and 259–265 (YGAPPAG). The segment at 175-265 (YGAPPAGYGA…PLGYGAPPAG (91 aa)) is 10 X 7 AA tandem repeat of Y-G-X-P-P-X-G. The short motif at 186–189 (PPGY) is the PPxY motif element. Low complexity predominate over residues 251–272 (GYGAPPLGYGAPPAGNEGPPAG). Residues 251-309 (GYGAPPLGYGAPPAGNEGPPAGYRASPAGSGARPQESTAAQAPENEASLPSASSSQVHS) are disordered. Residues 298 to 309 (SLPSASSSQVHS) are compositionally biased toward polar residues.

In terms of tissue distribution, expressed in testis.

Its function is as follows. May play a role in meiotic resumption and pronuclear formation, mediated by a WW domain-signaling pathway during fertilization. The protein is Postacrosomal sheath WW domain-binding protein (WBP2NL) of Homo sapiens (Human).